A 379-amino-acid chain; its full sequence is Alpha-humulene synthase eupE (379 aa).

This sequence belongs to the terpene synthase family. Alpha-humulene synthase eupE subfamily. Mg(2+) is required as a cofactor.

The enzyme catalyses (2E,6E)-farnesyl diphosphate = alpha-humulene + diphosphate. Its pathway is secondary metabolite biosynthesis; terpenoid biosynthesis. Alpha-humulene synthase; part of the gene cluster that mediates the biosynthesis of eupenifeldin, a bistropolone meroterpenoid that acts as an antitumor agent. The first step of eupenifeldin biosynthesis is the biosynthesis of 3-methylorcinaldehyde performed by the non-reducing polyketide synthase eupA. Oxidative dearomatization of 3-methylorcinaldehyde likely catalyzed by the FAD-dependent monooxygenase eupB is followed by oxidative ring expansion by the 2-oxoglutarate-dependent dioxygenase eupC to provide the first tropolone metabolite, tropolone stipitaldehyde. In parallel, generation of sesquiterpene alpha-humulene from farnesylpyrophosphate (FPP) is catalyzed by the terpene cyclase eupE. The cytochrome P450 monooxygenase eupD then hydroxylates humulene to humulenol. The putative Diels-Alderase eupF probably catalyzes the formation of the tropolone-humulene skeleton by linking humulenol and the polyketide moiety. The short-chain dehydrogenase/reductase eupG and the flavin-dependent monooxygenase eupH are also essential for eupenifeldin biosynthesis and are likely the additional decorating enzymes of the tropolone-humulene skeleton to produce final eupenifeldin or derivatives. The polypeptide is Alpha-humulene synthase eupE (Phoma sp).